Here is a 368-residue protein sequence, read N- to C-terminus: Phosphate acyltransferase (368 aa).

Belongs to the PlsX family. Homodimer. Probably interacts with PlsY.

It localises to the cytoplasm. It carries out the reaction a fatty acyl-[ACP] + phosphate = an acyl phosphate + holo-[ACP]. The protein operates within lipid metabolism; phospholipid metabolism. Catalyzes the reversible formation of acyl-phosphate (acyl-PO(4)) from acyl-[acyl-carrier-protein] (acyl-ACP). This enzyme utilizes acyl-ACP as fatty acyl donor, but not acyl-CoA. In Herpetosiphon aurantiacus (strain ATCC 23779 / DSM 785 / 114-95), this protein is Phosphate acyltransferase.